Reading from the N-terminus, the 232-residue chain is MYFPLEEPDAYGDFVRRLNRFAGIAVIGGREVKIHIHDPGRLQELLFPGVKIWARRRVGGKTEYYLTAVELEEELVLVDSSLHNKVAAWLVESGVIFQGYRVAKKEPAFGKGRFDLLLESPTGGRALVEVKGVTLEAGRRALFPDAPTARGARHMEELARATAEGYEAYVLFLVFRKRAASFSPNWDMDRKFAESLLRAHNAGVGVRAVKLEMFKWGLRYVGELPVDLTPPF.

It belongs to the SfsA family.

This Pyrobaculum arsenaticum (strain DSM 13514 / JCM 11321 / PZ6) protein is Sugar fermentation stimulation protein homolog.